The following is a 434-amino-acid chain: Glutamyl-tRNA reductase (434 aa).

Substrate is bound by residues 49-52, Ser109, 114-116, and Gln120; these read TCNR and EPQ. Catalysis depends on Cys50, which acts as the Nucleophile. NADP(+) is bound at residue 189–194; it reads GAGEMC.

It belongs to the glutamyl-tRNA reductase family. In terms of assembly, homodimer.

The enzyme catalyses (S)-4-amino-5-oxopentanoate + tRNA(Glu) + NADP(+) = L-glutamyl-tRNA(Glu) + NADPH + H(+). It functions in the pathway porphyrin-containing compound metabolism; protoporphyrin-IX biosynthesis; 5-aminolevulinate from L-glutamyl-tRNA(Glu): step 1/2. Functionally, catalyzes the NADPH-dependent reduction of glutamyl-tRNA(Glu) to glutamate 1-semialdehyde (GSA). The sequence is that of Glutamyl-tRNA reductase from Citrifermentans bemidjiense (strain ATCC BAA-1014 / DSM 16622 / JCM 12645 / Bem) (Geobacter bemidjiensis).